Consider the following 342-residue polypeptide: Probable dual-specificity RNA methyltransferase RlmN (342 aa).

E91 serves as the catalytic Proton acceptor. The region spanning 97-326 is the Radical SAM core domain; the sequence is YKFGNTACVS…CTVRRELGSD (230 aa). A disulfide bridge links C104 with C331. C111, C115, and C118 together coordinate [4Fe-4S] cluster. S-adenosyl-L-methionine is bound by residues 157–158, S189, 212–214, and N288; these read GE and SLH. The S-methylcysteine intermediate role is filled by C331.

Belongs to the radical SAM superfamily. RlmN family. It depends on [4Fe-4S] cluster as a cofactor.

Its subcellular location is the cytoplasm. The enzyme catalyses adenosine(2503) in 23S rRNA + 2 reduced [2Fe-2S]-[ferredoxin] + 2 S-adenosyl-L-methionine = 2-methyladenosine(2503) in 23S rRNA + 5'-deoxyadenosine + L-methionine + 2 oxidized [2Fe-2S]-[ferredoxin] + S-adenosyl-L-homocysteine. It catalyses the reaction adenosine(37) in tRNA + 2 reduced [2Fe-2S]-[ferredoxin] + 2 S-adenosyl-L-methionine = 2-methyladenosine(37) in tRNA + 5'-deoxyadenosine + L-methionine + 2 oxidized [2Fe-2S]-[ferredoxin] + S-adenosyl-L-homocysteine. Functionally, specifically methylates position 2 of adenine 2503 in 23S rRNA and position 2 of adenine 37 in tRNAs. In Caldanaerobacter subterraneus subsp. tengcongensis (strain DSM 15242 / JCM 11007 / NBRC 100824 / MB4) (Thermoanaerobacter tengcongensis), this protein is Probable dual-specificity RNA methyltransferase RlmN.